An 89-amino-acid chain; its full sequence is UPF0175 protein APE_0276a (89 aa).

This sequence belongs to the UPF0175 family.

This is UPF0175 protein APE_0276a from Aeropyrum pernix (strain ATCC 700893 / DSM 11879 / JCM 9820 / NBRC 100138 / K1).